The sequence spans 433 residues: IPGLSEKYTGEELYLMTTEKAAKTADICLSKLQEYFDALIAAISELEVRVPASETILRGRNVLDQIKEMLKHLQEKIRQTFVTLQEADFAGKLNRLKQVVQKTFQKAGNMVRSLQSKNFEDIKVQMQQLYKDAMASDYAHKLRSLAENVKKYISQIKNFSQKTLQKLSENLQQLVLYIKALREEYFDPTTLGWSVKYYEVEDKVLGLLKNLMDTLVIWYNEYAKDLSDLVTRLTDQVRELVENYRQEYYDLITDVEGKGRQKVMELSSAAQEKIRYWSAVAKRKINEHNRQVKAKLQEIYGQLSDSQEKLINVAKMLIDLTVEKYSTFMKYIFELLRWFEQATADSIKPYIAVREGELRIDVPFDWEYINQMPQKSREALRNKVELTRALIQQGVEQGTRKWEEMQAFIDEQLATEQLSFQQIVENIQKRMKT.

An N-linked (GlcNAc...) asparagine glycan is attached at asparagine 158.

The protein localises to the cytoplasm. It is found in the secreted. Its subcellular location is the lipid droplet. In terms of biological role, apolipoprotein B is a major protein constituent of chylomicrons, VLDL and LDL. It functions as a recognition signal for the cellular binding and internalization of LDL particles by the apoB/E receptor. The polypeptide is Apolipoprotein B (APOB) (Gallus gallus (Chicken)).